Reading from the N-terminus, the 370-residue chain is Peptide chain release factor 1 (370 aa).

N5-methylglutamine is present on Q237. Residues 286–296 (ERQRSARDATR) are compositionally biased toward basic and acidic residues. Residues 286–310 (ERQRSARDATRKSQVGTGDRSEKIR) form a disordered region.

This sequence belongs to the prokaryotic/mitochondrial release factor family. In terms of processing, methylated by PrmC. Methylation increases the termination efficiency of RF1.

The protein resides in the cytoplasm. Peptide chain release factor 1 directs the termination of translation in response to the peptide chain termination codons UAG and UAA. This chain is Peptide chain release factor 1, found in Anaeromyxobacter dehalogenans (strain 2CP-C).